The sequence spans 509 residues: Sorting nexin MVP1 (509 aa).

Positions 1–25 are enriched in polar residues; it reads MDTYSGQNGWADTSNASPWGDTNDT. The tract at residues 1–28 is disordered; that stretch reads MDTYSGQNGWADTSNASPWGDTNDTMPI. Residues 126-245 form the PX domain; the sequence is QLDIISIEEI…TFLTVPTDLT (120 aa). Arginine 170, serine 172, lysine 196, and arginine 211 together coordinate a 1,2-diacyl-sn-glycero-3-phospho-(1D-myo-inositol-3-phosphate).

It belongs to the sorting nexin family.

Its subcellular location is the cytoplasm. It is found in the membrane. Its function is as follows. Required for vacuolar protein sorting. The chain is Sorting nexin MVP1 (MVP1) from Candida glabrata (strain ATCC 2001 / BCRC 20586 / JCM 3761 / NBRC 0622 / NRRL Y-65 / CBS 138) (Yeast).